The chain runs to 138 residues: ATP synthase epsilon chain (138 aa).

The protein belongs to the ATPase epsilon chain family. As to quaternary structure, F-type ATPases have 2 components, CF(1) - the catalytic core - and CF(0) - the membrane proton channel. CF(1) has five subunits: alpha(3), beta(3), gamma(1), delta(1), epsilon(1). CF(0) has three main subunits: a, b and c.

The protein localises to the cell inner membrane. Its function is as follows. Produces ATP from ADP in the presence of a proton gradient across the membrane. This Polaromonas naphthalenivorans (strain CJ2) protein is ATP synthase epsilon chain.